Consider the following 143-residue polypeptide: Putative nickel-responsive regulator (143 aa).

Positions 82, 97, 99, and 105 each coordinate Ni(2+).

It belongs to the transcriptional regulatory CopG/NikR family. It depends on Ni(2+) as a cofactor.

Functionally, transcriptional regulator. In Helicobacter hepaticus (strain ATCC 51449 / 3B1), this protein is Putative nickel-responsive regulator.